The sequence spans 91 residues: Large ribosomal subunit protein uL23c (91 aa).

This sequence belongs to the universal ribosomal protein uL23 family. Part of the 50S ribosomal subunit.

The protein localises to the plastid. It is found in the chloroplast. In terms of biological role, binds to 23S rRNA. The protein is Large ribosomal subunit protein uL23c (rpl23) of Marchantia polymorpha (Common liverwort).